The primary structure comprises 860 residues: MGVSGSKGQKLFVSVLQRLLSERGLHVKESSAIEFYQFLIKVSPWFPEEGGLNLQDWKRVGREMKKYAAEHGTDSIPKQAYPIWLQLREILTEQSDLVLLSAEAKSVTEEELEEGLTGLLSASSQEKTYGTRGTAYAEIDTEVDKLSEHIYDEPYEEKEKADKNEEKDHVRKVKKIVQRKENSEHKRKEKDQKAFLATDWNNDDLSPEDWDDLEEQAAHYHDDDELILPVKRKVDKKKPLALRRKPLPPVGFAGAMAEAREKGDLTFTFPVVFMGESDDDDTPVWEPLPLKTLKELQSAVRTMGPSAPYTLQVVDMVASQWLTPSDWHQTARATLSPGDYVLWRTEYEEKSKETVQKTAGKRKGKVSLDMLLGTGQFLSPSSQIKLSKDVLKDVTTNAVLAWRAIPPPGVKKTVLAGLKQGNEESYETFISRLEEAVYRMMPRGEGSDILIKQLAWENANSLCQDLIRPMRKTGTMQDYIRACLDASPAVVQGMAYAAAMRGQKYSTFVKQTYGGGKGGQGSEGPVCFSCGKTGHIKRDCKEEKGSKRAPPGLCPRCKKGYHWKSECKSKFDKDGNPLPPLETNAENSKNLVKGQSPSPTQKGDKGKDSGLNPEAPPFTIHDLPRGTPGSAGLDLSSQKDLILSLEDGVSLVPTLVKGTLPEGTTGLIIGRSSNYKKGLEVLPGVIDSDFQGEIKVMVKAAKNAVIIHKGERIAQLLLLPYLKLPNPIIKEERGSEGFGSTSHVHWVQEISDSRPMLHISLNGRRFLGLLDTGADKTCIAGRDWPANWPIHQTESSLQGLGMACGVARSSQPLRWQHEDKSGIIHPFVIPTLPFTLWGRDIMKEIKVRLMTDSPDDSQDL.

Residue Gly2 is the site of N-myristoyl glycine; by host attachment. Composition is skewed to basic and acidic residues over residues 154 to 169 (PYEE…EKDH) and 178 to 193 (QRKE…KDQK). The disordered stretch occupies residues 154 to 193 (PYEEKEKADKNEEKDHVRKVKKIVQRKENSEHKRKEKDQK). Residues 305–308 (PSAP) carry the PTAP/PSAP motif motif. CCHC-type zinc fingers lie at residues 525–542 (PVCF…DCKE) and 552–569 (GLCP…ECKS). A disordered region spans residues 572–631 (DKDGNPLPPLETNAENSKNLVKGQSPSPTQKGDKGKDSGLNPEAPPFTIHDLPRGTPGSA). Residues 584–601 (NAENSKNLVKGQSPSPTQ) are compositionally biased toward polar residues. Positions 766-841 (FLGLLDTGAD…LPFTLWGRDI (76 aa)) constitute a Peptidase A2 domain. Asp771 acts as the Protease; shared with dimeric partner in catalysis.

Homodimer; when myristoylated. In terms of assembly, homodimer. As to quaternary structure, NC-dUTPase is a homotrimer. It depends on Mg(2+) as a cofactor. Released by autocatalytic processing. Post-translationally, myristoylated. Myristoylation of the matrix (MA) domain mediates the transport and binding of Gag polyproteins to the host plasma membrane and is required for the assembly of viral particles. In terms of processing, specific enzymatic cleavages in vivo yield mature proteins.

The protein localises to the virion. It carries out the reaction dUTP + H2O = dUMP + diphosphate + H(+). Its activity is regulated as follows. Inhibited by pepstatin A. Functionally, matrix protein. Its function is as follows. Nucleocapsid protein p14: Binds strongly to viral nucleic acids and promote their aggregation. Also destabilizes the nucleic acids duplexes via highly structured zinc-binding motifs. Capsid protein. In terms of biological role, NC-dUTPase has dUTPase activity, thereby preventing incorporation of uracil into DNA. Functionally, the aspartyl protease mediates proteolytic cleavages of Gag and Gag-Pol polyproteins during or shortly after the release of the virion from the plasma membrane. Cleavages take place as an ordered, step-wise cascade to yield mature proteins. This process is called maturation. Displays maximal activity during the budding process just prior to particle release from the cell. The polypeptide is Gag-Pro polyprotein (gag-pro) (Mus musculus (Mouse)).